Reading from the N-terminus, the 112-residue chain is 2Fe-2S ferredoxin (112 aa).

The 103-residue stretch at 5–107 folds into the 2Fe-2S ferredoxin-type domain; it reads IKVTFIINDG…GIKVHLPAAT (103 aa). C42, C48, C51, and C88 together coordinate [2Fe-2S] cluster.

The protein belongs to the adrenodoxin/putidaredoxin family. [2Fe-2S] cluster serves as cofactor.

Ferredoxin are iron-sulfur proteins that transfer electrons in a wide variety of metabolic reactions. The protein is 2Fe-2S ferredoxin (fdxB) of Rickettsia rickettsii.